Here is a 79-residue protein sequence, read N- to C-terminus: Short neurotoxin 3 (79 aa).

Positions methionine 1–threonine 23 are cleaved as a signal peptide. 4 disulfide bridges follow: cysteine 24-cysteine 41, cysteine 34-cysteine 59, cysteine 63-cysteine 71, and cysteine 72-cysteine 77.

Belongs to the three-finger toxin family. Short-chain subfamily. In terms of tissue distribution, expressed by the venom gland.

It localises to the secreted. This Oxyuranus scutellatus scutellatus (Australian taipan) protein is Short neurotoxin 3.